Reading from the N-terminus, the 405-residue chain is CMP-sialic acid transporter 3 (405 aa).

Over 1–39 (MKNGIAECPACHSKLVSPGSKTISRAYDDHKIRVSSKQR) the chain is Cytoplasmic. Residues 40–60 (VLNVLLVVGDCMLVGLQPVLV) form a helical membrane-spanning segment. Residues 61–73 (YMSKVDGKFNFSP) are Lumenal-facing. A helical transmembrane segment spans residues 74–94 (ISVNFLTEIAKVIFAIVMLLI). At 95–142 (QARHQKVGEKPLLSVSTFVQAARNNVLLAVPALLYAINNYLKFTMQLY) the chain is on the cytoplasmic side. The helical transmembrane segment at 143–163 (FNPATVKMLSNLKVLVIAVLL) threads the bilayer. At 164-170 (KMVMKRR) the chain is on the lumenal side. A helical transmembrane segment spans residues 171–191 (FSIIQWEALALLLIGISVNQL). Residues 192-199 (RSLPEGAT) are Cytoplasmic-facing. A helical transmembrane segment spans residues 200 to 220 (AIGIPLATGAYVCTVIFVTVP). Residues 221-243 (SMASVFNEYALKSQYDTSIYLQN) are Lumenal-facing. The helical transmembrane segment at 244–264 (LFLYGYGAIFNFLGILGTVIY) threads the bilayer. Residues 265–280 (KGPGSFDILQGHSRAT) lie on the Cytoplasmic side of the membrane. A helical transmembrane segment spans residues 281–301 (MFLILNNAAQGILSSFFFKYA). Topologically, residues 302-321 (DTILKKYSSTVATIFTGIAS) are lumenal. A helical transmembrane segment spans residues 322–342 (AALFGHVITMNFLLGISIVFI). Topologically, residues 343-405 (SMHQFFSPLA…SDDRTPLLPR (63 aa)) are cytoplasmic. The disordered stretch occupies residues 385-405 (GANEEASHRGESDDRTPLLPR). Residues 389–405 (EASHRGESDDRTPLLPR) are compositionally biased toward basic and acidic residues.

This sequence belongs to the nucleotide-sugar transporter family. CMP-Sialate:CMP antiporter (TC 2.A.7.12) subfamily.

The protein localises to the golgi apparatus membrane. Sugar transporter involved in the transport of CMP-sialic acid from the cytoplasm into the Golgi. The protein is CMP-sialic acid transporter 3 (UTR6) of Arabidopsis thaliana (Mouse-ear cress).